Here is a 268-residue protein sequence, read N- to C-terminus: Very-long-chain aldehyde decarbonylase GL1-8 (268 aa).

The next 4 membrane-spanning stretches (helical) occupy residues 26–46 (IGTF…SLLF), 70–90 (CVVR…ILSY), 107–127 (WTVV…IFYW), and 164–184 (ILFL…HLFT). One can recognise a Fatty acid hydroxylase domain in the interval 114–249 (VLFFFVLEDF…FIYMDWLFGT (136 aa)).

The protein belongs to the sterol desaturase family. As to quaternary structure, homodimer.

The protein resides in the endoplasmic reticulum membrane. The catalysed reaction is a long-chain fatty aldehyde + 2 NADPH + O2 + H(+) = a long-chain alkane + formate + 2 NADP(+) + H2O. Aldehyde decarbonylase involved in the conversion of aldehydes to alkanes. Core component of a very-long-chain alkane synthesis complex. This chain is Very-long-chain aldehyde decarbonylase GL1-8, found in Oryza sativa subsp. indica (Rice).